Consider the following 212-residue polypeptide: Uracil phosphoribosyltransferase (212 aa).

5-phospho-alpha-D-ribose 1-diphosphate contacts are provided by residues arginine 78, arginine 103, and 130–138; that span reads DPMLATGSS. Uracil-binding positions include isoleucine 193 and 198 to 200; that span reads GDA. Residue aspartate 199 participates in 5-phospho-alpha-D-ribose 1-diphosphate binding.

The protein belongs to the UPRTase family. Mg(2+) is required as a cofactor.

The enzyme catalyses UMP + diphosphate = 5-phospho-alpha-D-ribose 1-diphosphate + uracil. The protein operates within pyrimidine metabolism; UMP biosynthesis via salvage pathway; UMP from uracil: step 1/1. Its activity is regulated as follows. Allosterically activated by GTP. Catalyzes the conversion of uracil and 5-phospho-alpha-D-ribose 1-diphosphate (PRPP) to UMP and diphosphate. This Pseudomonas fluorescens (strain ATCC BAA-477 / NRRL B-23932 / Pf-5) protein is Uracil phosphoribosyltransferase.